Here is a 742-residue protein sequence, read N- to C-terminus: MAGRYGSQVMTMTVTNTPSADLAFTNLAYCSSSDLRQFSVPGSDLFLANVADSFILSLCGHGSIRDGNIALNAIQRRHARVSTGDMVSVSRFVPPENFDLAMLTLELEFVKKGTKSEQVDAALLSTQLKRKYTNQVLTVGQKATFEYHGTNYILTVNRADVEGQDHTNGIERGLLSKDTYIVFEASNASGIKIVNQREAASSNIFKHKEFNLESLGIGGLGAEFADIFRRAFASRVFPPHVTSRLGIKHVKGMLLFGPPGTGKTLMARQIGKMLNGKDPKIVNGPEVLSKFVGETEKNVRDLFADAEQDQRTLGDASELHVIIFDEIDAICKSRGSTRDGTGVHDSIVNQLLTKIDGVEALNNVLLIGMTNRKDLLDEALLRPGRLEVQVEISLPDEAGRLQILQIHTNKMKENSFLGTDINLQELAARTKNYSGAELEGVVKSATSYALNRQLSMDDLTKPVEEENIKITMEDFLHAIYEVQPAFGASTDDLERCRLNGMVDCGHRHNHIYKRAMLLVEQVKVSTRSPLVTCLLEGPSGSGKTALAATIGIDSDFPYVKIVSAETMIGLSESTKCAHIVKVFEDAYKSPMSIIILDDIERLLEFIAIGPRFSNIISQTLMVLLKRLPPKGKKLLVFGTTSEVTFLESVGISDCFSVTHSVPTLQKEDAKKVLNQLNLFSEDDVDSAAEALNDMPIKKIYMLIEMAAQGENGGSAEAIYAGREKININHFYDCLGDFIRFTG.

Residues 499–504 (NGMVDC) and 539–546 (SGSGKTAL) each bind ATP. Threonine 544 is a Mg(2+) binding site.

The protein belongs to the AAA ATPase family. As to quaternary structure, homohexamer. Binds to SNARE-SNAP complexes to form 20S particles. Mg(2+) is required as a cofactor.

Its subcellular location is the cytoplasm. The catalysed reaction is ATP + H2O = ADP + phosphate + H(+). In terms of biological role, required for vesicle-mediated transport. Catalyzes the fusion of transport vesicles within the Golgi cisternae. Is also required for transport from the endoplasmic reticulum to the Golgi stack. Seems to function as a fusion protein required for the delivery of cargo proteins to all compartments of the Golgi stack independent of vesicle origin. Required for maintaining the normal morphology of the Golgi apparatus. In Arabidopsis thaliana (Mouse-ear cress), this protein is Vesicle-fusing ATPase.